The primary structure comprises 427 residues: Serine--tRNA ligase (427 aa).

L-serine is bound at residue 231–233 (TAE). 262 to 264 (RSE) is an ATP binding site. Glu-285 provides a ligand contact to L-serine. 349–352 (EISS) is a binding site for ATP. Ser-385 provides a ligand contact to L-serine.

Belongs to the class-II aminoacyl-tRNA synthetase family. Type-1 seryl-tRNA synthetase subfamily. As to quaternary structure, homodimer. The tRNA molecule binds across the dimer.

The protein localises to the cytoplasm. The enzyme catalyses tRNA(Ser) + L-serine + ATP = L-seryl-tRNA(Ser) + AMP + diphosphate + H(+). It carries out the reaction tRNA(Sec) + L-serine + ATP = L-seryl-tRNA(Sec) + AMP + diphosphate + H(+). It participates in aminoacyl-tRNA biosynthesis; selenocysteinyl-tRNA(Sec) biosynthesis; L-seryl-tRNA(Sec) from L-serine and tRNA(Sec): step 1/1. Its function is as follows. Catalyzes the attachment of serine to tRNA(Ser). Is also able to aminoacylate tRNA(Sec) with serine, to form the misacylated tRNA L-seryl-tRNA(Sec), which will be further converted into selenocysteinyl-tRNA(Sec). The sequence is that of Serine--tRNA ligase from Exiguobacterium sp. (strain ATCC BAA-1283 / AT1b).